The chain runs to 69 residues: Large ribosomal subunit protein bL31 (69 aa).

4 residues coordinate Zn(2+): Cys16, Cys18, Cys36, and Cys39.

Belongs to the bacterial ribosomal protein bL31 family. Type A subfamily. Part of the 50S ribosomal subunit. It depends on Zn(2+) as a cofactor.

Its function is as follows. Binds the 23S rRNA. In Ruminiclostridium cellulolyticum (strain ATCC 35319 / DSM 5812 / JCM 6584 / H10) (Clostridium cellulolyticum), this protein is Large ribosomal subunit protein bL31.